Consider the following 184-residue polypeptide: Large ribosomal subunit protein uL15 (184 aa).

The segment at 1 to 45 (MDLSSLRPAKGAVKNKKRVGRGQGSGNGTTAGKGNNGQQSRSGYK) is disordered. The span at 21–35 (RGQGSGNGTTAGKGN) shows a compositional bias: gly residues.

This sequence belongs to the universal ribosomal protein uL15 family. As to quaternary structure, part of the 50S ribosomal subunit.

Binds to the 23S rRNA. This is Large ribosomal subunit protein uL15 from Pelodictyon phaeoclathratiforme (strain DSM 5477 / BU-1).